A 300-amino-acid chain; its full sequence is GTPase Era (300 aa).

In terms of domain architecture, Era-type G spans 8 to 176 (RCGYVAIVGR…EAQIAKHLPE (169 aa)). A G1 region spans residues 16–23 (GRPNVGKS). 16-23 (GRPNVGKS) serves as a coordination point for GTP. The tract at residues 42–46 (QTTRH) is G2. Residues 63 to 66 (DTPG) are G3. GTP contacts are provided by residues 63–67 (DTPGM) and 125–128 (NKTD). A G4 region spans residues 125 to 128 (NKTD). Residues 155-157 (ISA) form a G5 region. Residues 199–283 (VREKIMRQLG…MLNLWVKVKG (85 aa)) form the KH type-2 domain.

Belongs to the TRAFAC class TrmE-Era-EngA-EngB-Septin-like GTPase superfamily. Era GTPase family. In terms of assembly, monomer.

It localises to the cytoplasm. The protein localises to the cell inner membrane. Functionally, an essential GTPase that binds both GDP and GTP, with rapid nucleotide exchange. Plays a role in 16S rRNA processing and 30S ribosomal subunit biogenesis and possibly also in cell cycle regulation and energy metabolism. The protein is GTPase Era of Pseudomonas putida (strain ATCC 700007 / DSM 6899 / JCM 31910 / BCRC 17059 / LMG 24140 / F1).